Reading from the N-terminus, the 263-residue chain is UPF0739 protein C1orf74 homolog (263 aa).

The protein belongs to the UPF0739 family.

This chain is UPF0739 protein C1orf74 homolog, found in Xenopus tropicalis (Western clawed frog).